A 379-amino-acid polypeptide reads, in one-letter code: Chaperone protein DnaJ (379 aa).

The J domain occupies 6–71 (DYYEVLGVDK…QKRSRYDQFG (66 aa)). A CR-type zinc finger spans residues 138–220 (GVEREINVSK…CNGKGRLRST (83 aa)). 8 residues coordinate Zn(2+): C151, C154, C168, C171, C194, C197, C208, and C211. 4 CXXCXGXG motif repeats span residues 151–158 (CSKCTGSG), 168–175 (CNHCNGTG), 194–201 (CDACKGEG), and 208–215 (CPACNGKG).

The protein belongs to the DnaJ family. As to quaternary structure, homodimer. It depends on Zn(2+) as a cofactor.

It is found in the cytoplasm. In terms of biological role, participates actively in the response to hyperosmotic and heat shock by preventing the aggregation of stress-denatured proteins and by disaggregating proteins, also in an autonomous, DnaK-independent fashion. Unfolded proteins bind initially to DnaJ; upon interaction with the DnaJ-bound protein, DnaK hydrolyzes its bound ATP, resulting in the formation of a stable complex. GrpE releases ADP from DnaK; ATP binding to DnaK triggers the release of the substrate protein, thus completing the reaction cycle. Several rounds of ATP-dependent interactions between DnaJ, DnaK and GrpE are required for fully efficient folding. Also involved, together with DnaK and GrpE, in the DNA replication of plasmids through activation of initiation proteins. The sequence is that of Chaperone protein DnaJ from Ruminiclostridium cellulolyticum (strain ATCC 35319 / DSM 5812 / JCM 6584 / H10) (Clostridium cellulolyticum).